The primary structure comprises 441 residues: Protein eva-1 homolog C (441 aa).

The tract at residues 1 to 23 is disordered; it reads MLLPGRARQPPTPQPVQHPGLRR. Positions 1 to 48 are cleaved as a signal peptide; that stretch reads MLLPGRARQPPTPQPVQHPGLRRQVEPPGQLLRLFYCTVLVCSKEISA. The Extracellular portion of the chain corresponds to 49–322; sequence LTDFSGYLTK…AYIRAHPERA (274 aa). N-linked (GlcNAc...) asparagine glycosylation is present at Asn62. Residues 67 to 159 form the SUEL-type lectin 1 domain; the sequence is ACDGDYLNLQ…KYLLVSFKCQ (93 aa). N-linked (GlcNAc...) asparagine glycosylation occurs at Asn165. The SUEL-type lectin 2 domain occupies 168–260; it reads VCEDQELKLH…KYLTVTYACV (93 aa). A helical membrane pass occupies residues 323 to 343; the sequence is ALLFVSSVCIGLALTLCALVI. Over 344–441 the chain is Cytoplasmic; that stretch reads RESCAKDFRD…SLPRNMGQFY (98 aa). Residues 362 to 390 are disordered; the sequence is VPGSDKVEEDSEDEEEEEDPSESDFPGEL. Positions 368–383 are enriched in acidic residues; sequence VEEDSEDEEEEEDPSE.

It belongs to the EVA1 family. As to expression, ubiquitous.

It is found in the membrane. Binds heparin. The sequence is that of Protein eva-1 homolog C (EVA1C) from Homo sapiens (Human).